Consider the following 76-residue polypeptide: Vasotab-TY3 (76 aa).

The first 21 residues, M1–D21, serve as a signal peptide directing secretion. The region spanning D22 to K76 is the Kazal-like domain. Disulfide bonds link C23-C60, C27-C53, and C35-C75.

In terms of tissue distribution, expressed by the salivary gland.

Its subcellular location is the secreted. Its function is as follows. Vasodilator protein that inhibits vasoconstriction of isolated rat femoral artery induced by phenylephrine. Since platelet aggregation and vasoconstriction are key hemostatic responses, particularly in small wounds, this protein likely participates in the antihemostatic responses during blood feeding. Blocks L-type calcium channels (Cav1/CACNA1) in left ventricular myocytes isolated from rat hearts. The polypeptide is Vasotab-TY3 (Tabanus yao (Horsefly)).